Here is a 264-residue protein sequence, read N- to C-terminus: Thymidylate synthase (264 aa).

A dUMP-binding site is contributed by arginine 21. A (6R)-5,10-methylene-5,6,7,8-tetrahydrofolate-binding site is contributed by histidine 51. 126–127 (RR) provides a ligand contact to dUMP. Cysteine 146 (nucleophile) is an active-site residue. DUMP-binding positions include 166–169 (RSCD), asparagine 177, and 207–209 (HLY). Position 169 (aspartate 169) interacts with (6R)-5,10-methylene-5,6,7,8-tetrahydrofolate. (6R)-5,10-methylene-5,6,7,8-tetrahydrofolate is bound at residue alanine 263.

This sequence belongs to the thymidylate synthase family. Bacterial-type ThyA subfamily. As to quaternary structure, homodimer.

The protein localises to the cytoplasm. The catalysed reaction is dUMP + (6R)-5,10-methylene-5,6,7,8-tetrahydrofolate = 7,8-dihydrofolate + dTMP. Its pathway is pyrimidine metabolism; dTTP biosynthesis. In terms of biological role, catalyzes the reductive methylation of 2'-deoxyuridine-5'-monophosphate (dUMP) to 2'-deoxythymidine-5'-monophosphate (dTMP) while utilizing 5,10-methylenetetrahydrofolate (mTHF) as the methyl donor and reductant in the reaction, yielding dihydrofolate (DHF) as a by-product. This enzymatic reaction provides an intracellular de novo source of dTMP, an essential precursor for DNA biosynthesis. This Shewanella oneidensis (strain ATCC 700550 / JCM 31522 / CIP 106686 / LMG 19005 / NCIMB 14063 / MR-1) protein is Thymidylate synthase.